The following is a 216-amino-acid chain: TATA-box-binding protein-like 1 (216 aa).

Tandem repeats lie at residues 38–121 (KPVI…QRLG) and 126–210 (FNHF…ILLQ).

This sequence belongs to the TBP family.

The protein localises to the nucleus. In terms of biological role, TATA box-binding transcription factor. Members of the TBP family are differentially required to regulate transcription and development during early embryogenesis. The protein is TATA-box-binding protein-like 1 (trf1) of Entamoeba histolytica (strain ATCC 30459 / HM-1:IMSS / ABRM).